A 229-amino-acid polypeptide reads, in one-letter code: UPF0173 metal-dependent hydrolase SH1218 (229 aa).

The protein belongs to the UPF0173 family.

The protein is UPF0173 metal-dependent hydrolase SH1218 of Staphylococcus haemolyticus (strain JCSC1435).